Here is a 376-residue protein sequence, read N- to C-terminus: Glutamate 5-kinase (376 aa).

Residue K23 coordinates ATP. Residues S63, D150, and N162 each coordinate substrate. Residues 182-183 and 222-228 contribute to the ATP site; these read SD and TGGMASK. The PUA domain occupies 284 to 358; sequence GGALRIDAGA…GKQTAQLPEG (75 aa).

This sequence belongs to the glutamate 5-kinase family.

The protein resides in the cytoplasm. The catalysed reaction is L-glutamate + ATP = L-glutamyl 5-phosphate + ADP. The protein operates within amino-acid biosynthesis; L-proline biosynthesis; L-glutamate 5-semialdehyde from L-glutamate: step 1/2. In terms of biological role, catalyzes the transfer of a phosphate group to glutamate to form L-glutamate 5-phosphate. This Corynebacterium diphtheriae (strain ATCC 700971 / NCTC 13129 / Biotype gravis) protein is Glutamate 5-kinase.